The sequence spans 239 residues: Tetraspanin-9 (239 aa).

Over 1 to 13 the chain is Cytoplasmic; sequence MARGCLCCLKYMM. Residues 14 to 34 traverse the membrane as a helical segment; the sequence is FLFNLIFWLCGCGLLGVGIWL. At 35-55 the chain is on the extracellular side; that stretch reads SVSQGNFATFSPSFPSLSAAN. The helical transmembrane segment at 56–76 threads the bilayer; sequence LVIAIGTIVMVTGFLGCLGAI. At 77–85 the chain is on the cytoplasmic side; sequence KENKCLLLS. Residues 86–106 form a helical membrane-spanning segment; it reads FFIILLIILLAELILLILFFV. The Extracellular portion of the chain corresponds to 107–203; the sequence is YMDKVNENAK…VKMWFDDNKH (97 aa). Asparagine 180 is a glycosylation site (N-linked (GlcNAc...) asparagine). Residues 204-224 traverse the membrane as a helical segment; it reads VLGTIGMCILIIQILGMAFSM. Residues 225 to 239 lie on the Cytoplasmic side of the membrane; that stretch reads TLFQQIHRTGKKYDA.

It belongs to the tetraspanin (TM4SF) family.

The protein resides in the membrane. The polypeptide is Tetraspanin-9 (tspan9) (Xenopus tropicalis (Western clawed frog)).